Consider the following 372-residue polypeptide: Glutamate 5-kinase (372 aa).

Lysine 14 is a binding site for ATP. Substrate-binding residues include serine 54, aspartate 141, and asparagine 153. 173 to 174 (TD) provides a ligand contact to ATP. In terms of domain architecture, PUA spans 280–358 (AGRIVLDQGA…TDILSILGFV (79 aa)).

The protein belongs to the glutamate 5-kinase family.

The protein resides in the cytoplasm. The enzyme catalyses L-glutamate + ATP = L-glutamyl 5-phosphate + ADP. Its pathway is amino-acid biosynthesis; L-proline biosynthesis; L-glutamate 5-semialdehyde from L-glutamate: step 1/2. Catalyzes the transfer of a phosphate group to glutamate to form L-glutamate 5-phosphate. This chain is Glutamate 5-kinase, found in Herminiimonas arsenicoxydans.